A 511-amino-acid polypeptide reads, in one-letter code: Histidine ammonia-lyase (511 aa).

The 5-imidazolinone (Ala-Gly) cross-link spans Ala142 to Gly144. Residue Ser143 is modified to 2,3-didehydroalanine (Ser).

The protein belongs to the PAL/histidase family. In terms of processing, contains an active site 4-methylidene-imidazol-5-one (MIO), which is formed autocatalytically by cyclization and dehydration of residues Ala-Ser-Gly.

The protein localises to the cytoplasm. It carries out the reaction L-histidine = trans-urocanate + NH4(+). It participates in amino-acid degradation; L-histidine degradation into L-glutamate; N-formimidoyl-L-glutamate from L-histidine: step 1/3. In Rhizobium meliloti (strain 1021) (Ensifer meliloti), this protein is Histidine ammonia-lyase (hutH).